Consider the following 438-residue polypeptide: Thymidine phosphorylase (438 aa).

The protein belongs to the thymidine/pyrimidine-nucleoside phosphorylase family. As to quaternary structure, homodimer.

The catalysed reaction is thymidine + phosphate = 2-deoxy-alpha-D-ribose 1-phosphate + thymine. It functions in the pathway pyrimidine metabolism; dTMP biosynthesis via salvage pathway; dTMP from thymine: step 1/2. In terms of biological role, the enzymes which catalyze the reversible phosphorolysis of pyrimidine nucleosides are involved in the degradation of these compounds and in their utilization as carbon and energy sources, or in the rescue of pyrimidine bases for nucleotide synthesis. The protein is Thymidine phosphorylase of Colwellia psychrerythraea (strain 34H / ATCC BAA-681) (Vibrio psychroerythus).